The chain runs to 196 residues: MDNVPLVIASGNKGKIGEFKKLLDDFPIDLLTQPVGFEIEETGSTFMENARIKAIAVSQATGNLSLADDSGLSVEALGGAPGIYSSRYASSDKQRIEKLLAELKPFSNRKAKFECALCIASGEKVLIEVSGFCEGLITFFPKGQNGFGYDPIFEVSGLGETYAEMDHEKKKHIGHRGNAFKLLIPKLKQLLGSMKK.

Residue 10 to 15 (SGNKGK) participates in substrate binding. Residues E40 and D69 each coordinate Mg(2+). D69 serves as the catalytic Proton acceptor. Substrate contacts are provided by residues S70, 147 to 150 (FGYD), K170, and 175 to 176 (HR).

It belongs to the HAM1 NTPase family. In terms of assembly, homodimer. The cofactor is Mg(2+).

The enzyme catalyses XTP + H2O = XMP + diphosphate + H(+). It carries out the reaction dITP + H2O = dIMP + diphosphate + H(+). It catalyses the reaction ITP + H2O = IMP + diphosphate + H(+). In terms of biological role, pyrophosphatase that catalyzes the hydrolysis of nucleoside triphosphates to their monophosphate derivatives, with a high preference for the non-canonical purine nucleotides XTP (xanthosine triphosphate), dITP (deoxyinosine triphosphate) and ITP. Seems to function as a house-cleaning enzyme that removes non-canonical purine nucleotides from the nucleotide pool, thus preventing their incorporation into DNA/RNA and avoiding chromosomal lesions. This Prochlorococcus marinus (strain NATL1A) protein is dITP/XTP pyrophosphatase.